Reading from the N-terminus, the 102-residue chain is Small ribosomal subunit protein uS10 (102 aa).

The protein belongs to the universal ribosomal protein uS10 family. As to quaternary structure, part of the 30S ribosomal subunit.

Involved in the binding of tRNA to the ribosomes. This chain is Small ribosomal subunit protein uS10, found in Lactobacillus delbrueckii subsp. bulgaricus (strain ATCC 11842 / DSM 20081 / BCRC 10696 / JCM 1002 / NBRC 13953 / NCIMB 11778 / NCTC 12712 / WDCM 00102 / Lb 14).